A 186-amino-acid chain; its full sequence is Lipid A palmitoyltransferase PagP (186 aa).

Positions 1 to 25 (MNVSKYVAIFSFVFIQLISVGKVFA) are cleaved as a signal peptide. Active-site residues include H58, D101, and S102.

The protein belongs to the lipid A palmitoyltransferase family. In terms of assembly, homodimer.

It is found in the cell outer membrane. The catalysed reaction is lipid A (E. coli) + a 1-hexadecanoyl-2-acyl-sn-glycero-3-phosphocholine = hepta-acyl lipid A (E. coli) + a 2-acyl-sn-glycero-3-phosphocholine. It catalyses the reaction lipid IIA + a 1-hexadecanoyl-2-acyl-sn-glycero-3-phosphocholine = lipid IIB + a 2-acyl-sn-glycero-3-phosphocholine. The enzyme catalyses lipid IVA (E. coli) + a 1-hexadecanoyl-2-acyl-sn-glycero-3-phosphocholine = lipid IVB (E. coli) + a 2-acyl-sn-glycero-3-phosphocholine. Its function is as follows. Transfers a palmitate residue from the sn-1 position of a phospholipid to the N-linked hydroxymyristate on the proximal unit of lipid A or its precursors. The protein is Lipid A palmitoyltransferase PagP of Escherichia coli O157:H7.